The primary structure comprises 478 residues: GDP-fucose protein O-fucosyltransferase 3 (478 aa).

At 1-9 (MVRIQRGKL) the chain is on the cytoplasmic side. A helical; Signal-anchor for type II membrane protein transmembrane segment spans residues 10 to 30 (LAFCLCVMATVFLLITLQVVV). The Lumenal portion of the chain corresponds to 31-478 (ELGKFEGKKF…QEFWALVFKD (448 aa)). N-linked (GlcNAc...) asparagine glycans are attached at residues Asn-110 and Asn-168. Cys-389 and Cys-392 are joined by a disulfide.

It belongs to the glycosyltransferase 10 family.

It localises to the endoplasmic reticulum membrane. The enzyme catalyses L-threonyl-[protein] + GDP-beta-L-fucose = 3-O-(alpha-L-fucosyl)-L-threonyl-[protein] + GDP + H(+). The catalysed reaction is L-seryl-[protein] + GDP-beta-L-fucose = 3-O-(alpha-L-fucosyl)-L-seryl-[protein] + GDP + H(+). Its pathway is protein modification; protein glycosylation. In terms of biological role, protein O-fucosyltransferase that specifically catalyzes O-fucosylation of serine or threonine residues in EMI domains of target proteins, such as MMRN1, MMRN2 and EMID1. Attaches fucose through an O-glycosidic linkage. O-fucosylation of EMI domain-containing proteins may be required for facilitating protein folding and secretion. May also show alpha-(1,3)-fucosyltransferase activity toward the innermost N-acetyl glucosamine (GlcNAc) residue in biantennary N-glycan acceptors. However, this was tested with a library of synthetic substrates and this activity is unsure in vivo. May be involved in biosynthesis of Lewis X-carrying biantennary N-glycans that regulate neuron stem cell self-renewal during brain development. This is GDP-fucose protein O-fucosyltransferase 3 (FUT10) from Bos taurus (Bovine).